A 384-amino-acid chain; its full sequence is S-adenosylmethionine synthase (384 aa).

Residue His-15 participates in ATP binding. Asp-17 is a binding site for Mg(2+). Residue Glu-43 coordinates K(+). 2 residues coordinate L-methionine: Glu-56 and Gln-99. Residues 99–109 (QSPDINQGVDR) are flexible loop. ATP is bound by residues 164–166 (DAK), 231–232 (RF), Asp-240, 246–247 (RK), Ala-263, and Lys-267. Asp-240 is a binding site for L-methionine. Residue Lys-271 participates in L-methionine binding.

This sequence belongs to the AdoMet synthase family. Homotetramer; dimer of dimers. Requires Mg(2+) as cofactor. It depends on K(+) as a cofactor.

It is found in the cytoplasm. The catalysed reaction is L-methionine + ATP + H2O = S-adenosyl-L-methionine + phosphate + diphosphate. It participates in amino-acid biosynthesis; S-adenosyl-L-methionine biosynthesis; S-adenosyl-L-methionine from L-methionine: step 1/1. Catalyzes the formation of S-adenosylmethionine (AdoMet) from methionine and ATP. The overall synthetic reaction is composed of two sequential steps, AdoMet formation and the subsequent tripolyphosphate hydrolysis which occurs prior to release of AdoMet from the enzyme. This is S-adenosylmethionine synthase from Shewanella woodyi (strain ATCC 51908 / MS32).